The primary structure comprises 190 residues: Putative 3-methyladenine DNA glycosylase (190 aa).

Belongs to the DNA glycosylase MPG family.

In Deinococcus radiodurans (strain ATCC 13939 / DSM 20539 / JCM 16871 / CCUG 27074 / LMG 4051 / NBRC 15346 / NCIMB 9279 / VKM B-1422 / R1), this protein is Putative 3-methyladenine DNA glycosylase.